Here is a 266-residue protein sequence, read N- to C-terminus: Hydroxyethylthiazole kinase (266 aa).

Residue Met41 coordinates substrate. ATP contacts are provided by Arg117 and Ser163. Position 190 (Ala190) interacts with substrate.

The protein belongs to the Thz kinase family. Requires Mg(2+) as cofactor.

The catalysed reaction is 5-(2-hydroxyethyl)-4-methylthiazole + ATP = 4-methyl-5-(2-phosphooxyethyl)-thiazole + ADP + H(+). Its pathway is cofactor biosynthesis; thiamine diphosphate biosynthesis; 4-methyl-5-(2-phosphoethyl)-thiazole from 5-(2-hydroxyethyl)-4-methylthiazole: step 1/1. In terms of biological role, catalyzes the phosphorylation of the hydroxyl group of 4-methyl-5-beta-hydroxyethylthiazole (THZ). The polypeptide is Hydroxyethylthiazole kinase (Histophilus somni (strain 129Pt) (Haemophilus somnus)).